The primary structure comprises 221 residues: Esterase C25G4.2 (221 aa).

Active-site charge relay system residues include Ser-106, Asp-166, and His-194.

The protein belongs to the LovG family.

The chain is Esterase C25G4.2 from Caenorhabditis elegans.